We begin with the raw amino-acid sequence, 179 residues long: MSPLPDLASVVRTIPDYPKPGVMFRDITTLLGNPQAFRRTVDELVQPWAGAKIDKVAGIEARGFIVGGAVAHQLSAGFVPIRKKGKLPHQTVRMAYALEYGQDEMEMHVDAVHPGERVILVDDLIATGGTAEGAVKLLRQIGAQVEAACFIVDLPDLGGAEKLRAMGVPVRTIMSFSGH.

This sequence belongs to the purine/pyrimidine phosphoribosyltransferase family. As to quaternary structure, homodimer.

The protein localises to the cytoplasm. The enzyme catalyses AMP + diphosphate = 5-phospho-alpha-D-ribose 1-diphosphate + adenine. It participates in purine metabolism; AMP biosynthesis via salvage pathway; AMP from adenine: step 1/1. Catalyzes a salvage reaction resulting in the formation of AMP, that is energically less costly than de novo synthesis. This is Adenine phosphoribosyltransferase from Azorhizobium caulinodans (strain ATCC 43989 / DSM 5975 / JCM 20966 / LMG 6465 / NBRC 14845 / NCIMB 13405 / ORS 571).